The primary structure comprises 351 residues: Palmitoyltransferase spe-10 (351 aa).

Transmembrane regions (helical) follow at residues 21–43, 60–80, 198–218, and 241–261; these read TGWI…LWWS, IQAT…MWSL, YFLL…LTSL, and LFSF…LIIF. In terms of domain architecture, DHHC spans 154 to 204; it reads KYCYECGHIKPDRARHCSSCGKCCIKYDHHCPWINMCVTHVNYKYFLLYII.

Belongs to the DHHC palmitoyltransferase family. In terms of tissue distribution, expressed during spermatogenesis in budding and budded spermatids.

The protein resides in the membrane. The catalysed reaction is L-cysteinyl-[protein] + hexadecanoyl-CoA = S-hexadecanoyl-L-cysteinyl-[protein] + CoA. Involved in spermatogenesis, specifically in the morphogenesis of fibrous body-membranous organelles (FB-MO), which are Golgi-derived organelles used for transporting sperm-specific components, in spermatocytes and in their localization into budding spermatids. Required for the proper formation of spermatids and spermatozoa. The chain is Palmitoyltransferase spe-10 from Caenorhabditis elegans.